The following is a 575-amino-acid chain: Bifunctional decalin synthase calF (575 aa).

The N-terminal stretch at 1-18 is a signal peptide; it reads MSFKPLLLSLSLLSPALG. N-linked (GlcNAc...) asparagine glycosylation is found at Asn-46, Asn-103, Asn-127, Asn-175, Asn-268, Asn-308, Asn-359, Asn-425, and Asn-485. The 180-residue stretch at 118-297 folds into the FAD-binding PCMH-type domain; it reads LGNYASYSIN…LSMTTKVFQD (180 aa).

The protein belongs to the oxygen-dependent FAD-linked oxidoreductase family.

It functions in the pathway secondary metabolite biosynthesis. Its function is as follows. Bifunctional decaline synthase; part of the gene cluster that mediates the biosynthesis of calbistrin A and related compounds. Calbistrin A is a secondary metabolite with an interesting structure that was recently found to have bioactivity against leukemia cells. It consists of two polyketides linked by an ester bond: a bicyclic decalin containing polyketide and a linear 12 carbon dioic acid structure. The polyketide synthase calA is probably responsible for forming the decalin moiety. Because calA lacks a designated enoylreductase (ER) domain, the required activity is provided by the trans-enoyl reductase calK. Following release from the PKS, calF then probably catalyzes the oxidation and the subsequent Diels Alder cycloisomerization that lead to the formation of the decalin moiety. The decalin polyketide backbone includes two C-methyl groups, at C7 and C11 in backbone, of which the C7 position is probably methylated by the methyltransferase domain of calA. A candidate for adding the methyl group at C11, if not done by CalA, is the cluster methyltransferase calH. Several additional tailoring enzymes within the cluster could be involved in the modification of the decalin polyketide product. Those include the 3 cytochrome P450 monooxygenases CalE, CalG and CalL, of which one might be responsible for the introduction of the extra hydroxyl group attached to the backbone of the decalin moiety, at position C9 in the backbone, that allows for attachment of the linear moiety. One tailoring enzyme activity that is expected to be involved in biosynthesis of calbistrin is an acyltransferase for connecting the two polyketide synthase products, and which could be performed by the cluster acyltransferase calJ. The enzyme responsible for the biosynthesis of the linear moiety, probably a second PKS, has not been identified yet. This is Bifunctional decalin synthase calF from Penicillium decumbens.